Consider the following 238-residue polypeptide: Ribonuclease PH (238 aa).

Residues R86 and 124 to 126 each bind phosphate; that span reads GTR.

The protein belongs to the RNase PH family. Homohexameric ring arranged as a trimer of dimers.

The enzyme catalyses tRNA(n+1) + phosphate = tRNA(n) + a ribonucleoside 5'-diphosphate. In terms of biological role, phosphorolytic 3'-5' exoribonuclease that plays an important role in tRNA 3'-end maturation. Removes nucleotide residues following the 3'-CCA terminus of tRNAs; can also add nucleotides to the ends of RNA molecules by using nucleoside diphosphates as substrates, but this may not be physiologically important. Probably plays a role in initiation of 16S rRNA degradation (leading to ribosome degradation) during starvation. This chain is Ribonuclease PH, found in Salmonella choleraesuis (strain SC-B67).